The sequence spans 1883 residues: Lysophospholipase NTE1 (1883 aa).

Topologically, residues 1 to 75 are cytoplasmic; it reads MSQVPVASPA…LLRVVLASLN (75 aa). The helical transmembrane segment at 76-96 threads the bilayer; sequence LIRILATFSTITVPSLVYAIL. Residues 97 to 103 lie on the Lumenal side of the membrane; the sequence is HYSLTLQ. Residues 104 to 124 traverse the membrane as a helical segment; that stretch reads LNFPSLALLFLTSLISAFIWL. Residues 125-1883 lie on the Cytoplasmic side of the membrane; it reads RYRHLNKYER…AGISARRNSI (1759 aa). 6 disordered regions span residues 284-327, 355-410, 618-693, 716-764, 921-1069, and 1084-1108; these read HLAP…FNPP, ERLG…LYHA, SQRS…MVGP, SAQP…RKGS, EEDR…ATNS, and LHQQQPLRGKPSQQSSQRSKDGKRS. Positions 311 to 327 are enriched in polar residues; the sequence is NNATAPTSPYSSAFNPP. Low complexity predominate over residues 372–383; it reads ARTASSGTASAT. A compositionally biased stretch (polar residues) spans 650–668; the sequence is PSLTTSSKQSNQKPTSSRI. Residues 863-1158 and 1166-1285 each bind a nucleoside 3',5'-cyclic phosphate; these read AGHG…RRPI and RLLS…IARR. A compositionally biased stretch (polar residues) spans 936 to 948; it reads TDASSGSSRQNRP. The segment covering 964-974 has biased composition (basic and acidic residues); that stretch reads LLDERNLREAD. Composition is skewed to polar residues over residues 988–998 and 1084–1100; these read ISSNGDGNSGS and LHQQQPLRGKPSQQSSQ. A PNPLA domain is found at 1544–1708; the sequence is LVLGGGGARG…VDNLPVTVML (165 aa). Positions 1548-1553 match the GXGXXG motif; it reads GGGARG. A GXSXG motif is present at residues 1575–1579; the sequence is GTSIG. The Nucleophile role is filled by serine 1577. The Proton acceptor role is filled by aspartate 1695. The DGA/G motif lies at 1695-1697; it reads DGG. The disordered stretch occupies residues 1852–1883; that stretch reads DESGVGGGVRKIRKKRRRTRRKAGISARRNSI. The segment covering 1861-1874 has biased composition (basic residues); the sequence is RKIRKKRRRTRRKA.

The protein belongs to the NTE family.

The protein resides in the endoplasmic reticulum membrane. The catalysed reaction is a 1-acyl-sn-glycero-3-phosphocholine + H2O = sn-glycerol 3-phosphocholine + a fatty acid + H(+). Its activity is regulated as follows. Inhibited by organophosphorus esters. In terms of biological role, intracellular phospholipase B that catalyzes the double deacylation of phosphatidylcholine (PC) to glycerophosphocholine (GroPCho). Plays an important role in membrane lipid homeostasis. Responsible for the rapid PC turnover in response to inositol, elevated temperatures, or when choline is present in the growth medium. The sequence is that of Lysophospholipase NTE1 (NTE1) from Mycosarcoma maydis (Corn smut fungus).